The sequence spans 482 residues: Docking protein 1 (482 aa).

Methionine 1 is modified (N-acetylmethionine). In terms of domain architecture, PH spans 4-119; it reads AVMEGPLFLQ…WVQTLCRTAF (116 aa). Phosphoserine is present on serine 48. The region spanning 151–259 is the IRS-type PTB domain; sequence EGSQFWVTSQ…QQQKAQGKVG (109 aa). A phosphoserine mark is found at serine 269 and serine 290. A disordered region spans residues 269–328; it reads SHDGETEGKTVPPPVPQDPLGSPPALYAEPLDSLRIPPGPSQDSVYSDPLGSTPAGAGEG. Phosphotyrosine occurs at positions 295, 336, 340, 361, and 376. Positions 353–373 are disordered; it reads TDSKEDPIYDEPEGLAPAPPR. Tyrosine 397 bears the Phosphotyrosine; by INSR mark. Residues 398–482 form a disordered region; that stretch reads ELPYNPATDD…RAGVKSEGST (85 aa). Phosphotyrosine is present on tyrosine 408. Pro residues predominate over residues 410-423; the sequence is VPPPRSPKPAPAPK. Serine 415 carries the phosphoserine modification. The span at 432–459 shows a compositional bias: polar residues; sequence SGTTRGSGSKGFSSDTALYSQVQKSGTS. Tyrosine 450 carries the phosphotyrosine modification.

Belongs to the DOK family. Type A subfamily. In terms of assembly, interacts with RasGAP, INPP5D/SHIP1 and ABL1. Interacts directly with phosphorylated ITGB3. Interacts with SRMS (via the SH2 and SH3 domains). Constitutively tyrosine-phosphorylated. Phosphorylated by TEC. Phosphorylated on tyrosine residues by the insulin receptor kinase. Results in the negative regulation of the insulin signaling pathway. Phosphorylated by LYN. Phosphorylated on tyrosine residues by SRMS. Expressed in lung, spleen, skeletal muscle and kidney.

It localises to the cytoplasm. It is found in the nucleus. In terms of biological role, DOK proteins are enzymatically inert adaptor or scaffolding proteins. They provide a docking platform for the assembly of multimolecular signaling complexes. DOK1 appears to be a negative regulator of the insulin signaling pathway. Modulates integrin activation by competing with talin for the same binding site on ITGB3. This is Docking protein 1 (Dok1) from Mus musculus (Mouse).